Consider the following 922-residue polypeptide: Dual serine/threonine and tyrosine protein kinase (922 aa).

The Protein kinase domain maps to 645-899 (PKLGRELGRG…PLLGIVEPSL (255 aa)). ATP is bound by residues 651–659 (LGRGQYGVV) and K674. The active-site Proton acceptor is the D770.

It belongs to the protein kinase superfamily. Ser/Thr protein kinase family.

The protein localises to the cytoplasm. Its subcellular location is the cell membrane. It is found in the apical cell membrane. It localises to the basolateral cell membrane. The protein resides in the cell junction. The catalysed reaction is L-seryl-[protein] + ATP = O-phospho-L-seryl-[protein] + ADP + H(+). The enzyme catalyses L-threonyl-[protein] + ATP = O-phospho-L-threonyl-[protein] + ADP + H(+). It catalyses the reaction L-tyrosyl-[protein] + ATP = O-phospho-L-tyrosyl-[protein] + ADP + H(+). May act as a positive regulator of ERK phosphorylation downstream of fibroblast growth factor-receptor activation. May induce both caspase-dependent apoptosis and caspase-independent cell death. May play a role in the embryonic development. The polypeptide is Dual serine/threonine and tyrosine protein kinase (Tetraodon nigroviridis (Spotted green pufferfish)).